The sequence spans 228 residues: MASEELQKDLEEVKVLLEKATRKRVRDALTAEKSKIETEIKNKMQQKSQKKAELLDNEKPAAVVAPITTGYTVKISNYGWDQSDKFVKIYITLTGVHQVPTENVQVHFTERSFDLLVKNLNGKSYSMIVNNLLKPISVEGSSKKVKTDTVLILCRKKVENTRWDYLTQVEKERKEKEKPSYDAETDPSEGLMNVLKKIYEDGDDDMKRTINKAWVESREKQAKGDTEF.

A2 carries the post-translational modification N-acetylalanine. The interaction with SIAH1 stretch occupies residues 2-80 (ASEELQKDLE…YTVKISNYGW (79 aa)). A Phosphoserine modification is found at S3. 2 positions are modified to N6-acetyllysine: K8 and K19. S34 is subject to Phosphoserine. The region spanning 73–167 (VKISNYGWDQ…VENTRWDYLT (95 aa)) is the CS domain. The interval 73–228 (VKISNYGWDQ…EKQAKGDTEF (156 aa)) is interaction with SKP1. Residues K85 and K118 each carry the N6-acetyllysine modification. The interval 154–228 (CRKKVENTRW…EKQAKGDTEF (75 aa)) is interaction with S100A6. The SGS domain occupies 168–228 (QVEKERKEKE…EKQAKGDTEF (61 aa)).

In terms of assembly, interacts with protein of the S100 family S100A1, S100A6, S100B, S100P and S100A12 in a calcium-dependent manner. Component of some large E3 complex at least composed of UBE2D1, SIAH1, CACYBP/SIP, SKP1, APC and TBL1X. Interacts directly with SIAH1, SIAH2 and SKP1. In terms of processing, phosphorylated on serine residues. Phosphorylated upon induction by RA or at high calcium concentrations.

The protein localises to the cytoplasm. It localises to the nucleus. Functionally, may be involved in calcium-dependent ubiquitination and subsequent proteasomal degradation of target proteins. Probably serves as a molecular bridge in ubiquitin E3 complexes. Participates in the ubiquitin-mediated degradation of beta-catenin (CTNNB1). The protein is Calcyclin-binding protein (CACYBP) of Pongo abelii (Sumatran orangutan).